A 195-amino-acid polypeptide reads, in one-letter code: UPF0157 protein BH1888 (195 aa).

Positions 1–12 (MPPMKDSSNSTP) are enriched in polar residues. The tract at residues 1 to 21 (MPPMKDSSNSTPRTDEELQEV) is disordered.

Belongs to the UPF0157 (GrpB) family.

This Halalkalibacterium halodurans (strain ATCC BAA-125 / DSM 18197 / FERM 7344 / JCM 9153 / C-125) (Bacillus halodurans) protein is UPF0157 protein BH1888.